The primary structure comprises 411 residues: Secretion apparatus protein BsaZ (411 aa).

The next 4 helical transmembrane spans lie at 28–48 (IVALIVIATGALAAPALVDLT), 80–100 (IAAPFVLLCAAAGALPSLVQS), 137–157 (ALLYVGVFALTVRVFADLYHA), and 175–195 (IVLTVRLVLLFLLCALPVLIL). Residues 341–411 (AANRGGPPPE…APARTGDQNA (71 aa)) are disordered. Over residues 370–404 (DACADNAFPDDAPPGAAAPNAGSPDSPAPDGGAPA) the composition is skewed to low complexity.

It belongs to the type III secretion exporter family.

The protein localises to the cell membrane. Its function is as follows. Part of the bsa type III secretion system, is involved in the intracellular replication of invading bacteria inside the host cell. Probably necessary for the lysis of the vacuole membrane and escape into the host cell cytoplasm. In Burkholderia pseudomallei (strain 1106a), this protein is Secretion apparatus protein BsaZ (bsaZ).